The sequence spans 601 residues: Glutathione-regulated potassium-efflux system protein KefB (601 aa).

13 helical membrane-spanning segments follow: residues 4 to 24 (ADLL…VPLA), 29 to 49 (IGAV…GLGF), 55 to 75 (EILH…GLEL), 87 to 107 (IFGV…GLLM), 111 to 131 (FLWQ…TAMA), 152 to 172 (VLLF…LLAG), 177 to 197 (HFDW…LIGG), 207 to 227 (FIAA…LVLS), 230 to 250 (LFMD…GVLL), 262 to 282 (AIDP…GMSL), 284 to 304 (LGVL…LVVI), 324 to 344 (MQFA…FSTA), and 356 to 376 (ALLL…MKGI). The RCK N-terminal domain maps to 400–519 (KPQVVVVGFG…AGVTQFSRET (120 aa)).

This sequence belongs to the monovalent cation:proton antiporter 2 (CPA2) transporter (TC 2.A.37) family. KefB subfamily. In terms of assembly, interacts with the regulatory subunit KefG.

It localises to the cell inner membrane. Its function is as follows. Pore-forming subunit of a potassium efflux system that confers protection against electrophiles. Catalyzes K(+)/H(+) antiport. This chain is Glutathione-regulated potassium-efflux system protein KefB, found in Salmonella typhi.